The primary structure comprises 257 residues: MGDDFLAIFKTRAIIIKTQDIKESDKLVWLFTEKLGKISTIAKGSKKSRSPLFSTTLQFCYGDYVVYKGKSLYVINESSLIDSFQHLLNDLNDLTYASYFCELTDIAMDDGESSRELFRYLATSFYLIRSHAVDIETLARTFELKILKTTGYGLNFDYCALCRKKITSFEYLHLQYLGGICRECDKENSMHISYSTCSALKYLSSISMENVYKVVLTKEVKEELYKVLTLIISQNYFRKPKSLDILRNLISFEKNKV.

Belongs to the RecO family.

In terms of biological role, involved in DNA repair and RecF pathway recombination. The sequence is that of DNA repair protein RecO from Clostridium kluyveri (strain ATCC 8527 / DSM 555 / NBRC 12016 / NCIMB 10680 / K1).